The primary structure comprises 200 residues: NAD(P)H dehydrogenase (quinone) (200 aa).

In terms of domain architecture, Flavodoxin-like spans 4–190; that stretch reads VLVLYYSTYG…EGARFQGRHV (187 aa). FMN contacts are provided by residues 10 to 15 and 78 to 80; these read STYGHV and TRY. Residue tyrosine 12 participates in NAD(+) binding. Tryptophan 98 is a substrate binding site. Residues 113–119 and histidine 134 contribute to the FMN site; that span reads STASQHG.

The protein belongs to the WrbA family. Requires FMN as cofactor.

It carries out the reaction a quinone + NADH + H(+) = a quinol + NAD(+). The catalysed reaction is a quinone + NADPH + H(+) = a quinol + NADP(+). This is NAD(P)H dehydrogenase (quinone) from Methylobacterium radiotolerans (strain ATCC 27329 / DSM 1819 / JCM 2831 / NBRC 15690 / NCIMB 10815 / 0-1).